Consider the following 106-residue polypeptide: Large ribosomal subunit protein uL24 (106 aa).

This sequence belongs to the universal ribosomal protein uL24 family. As to quaternary structure, part of the 50S ribosomal subunit.

Its function is as follows. One of two assembly initiator proteins, it binds directly to the 5'-end of the 23S rRNA, where it nucleates assembly of the 50S subunit. In terms of biological role, one of the proteins that surrounds the polypeptide exit tunnel on the outside of the subunit. The polypeptide is Large ribosomal subunit protein uL24 (Polaromonas naphthalenivorans (strain CJ2)).